Here is a 71-residue protein sequence, read N- to C-terminus: Disintegrin viridin (71 aa).

Positions 1-71 (AGEECDCGSP…SADCPRNRFH (71 aa)) constitute a Disintegrin domain. 6 cysteine pairs are disulfide-bonded: C5–C20, C7–C15, C14–C37, C28–C34, C33–C58, and C46–C65. The Cell attachment site signature appears at 50–52 (RGD). The tract at residues 50-71 (RGDNPDDRCTGQSADCPRNRFH) is disordered.

Belongs to the venom metalloproteinase (M12B) family. P-II subfamily. P-IIa sub-subfamily. As to quaternary structure, monomer (disintegrin). In terms of tissue distribution, expressed by the venom gland.

The protein localises to the secreted. In terms of biological role, inhibits fibrinogen interaction with platelets. Acts by binding to alpha-IIb/beta-3 (ITGA2B/ITGB3) on the platelet surface and inhibits aggregation induced by ADP, thrombin, platelet-activating factor and collagen. The polypeptide is Disintegrin viridin (Crotalus viridis viridis (Prairie rattlesnake)).